Here is a 953-residue protein sequence, read N- to C-terminus: Trafficking kinesin-binding protein 1 (953 aa).

In terms of domain architecture, HAP1 N-terminal spans 47 to 354 (LEEQLPHYKL…EELKNLRNKT (308 aa)). Positions 104 to 356 (QMTKTYNDID…LKNLRNKTMP (253 aa)) form a coiled coil. Residues 359–509 (TSRRYHSLGL…RRLSLRRENY (151 aa)) form an interaction with HGS region. Residue S447 is glycosylated (O-linked (GlcNAc) serine). The tract at residues 472–495 (AADLGNDERSKKPGTPGTPGSHDL) is disordered. A coiled-coil region spans residues 492 to 532 (SHDLETALRRLSLRRENYLSERRFFEEEQERKLQELAEKGE). At S537 the chain carries Phosphoserine. Positions 658-672 (PGKCMSQTNSTFTFT) are interaction with OGT. Residues S680 and S719 are each glycosylated (O-linked (GlcNAc) serine). Residue S719 is modified to Phosphoserine. The interval 777–796 (VIPSTPPNSPMQTPTSSPPS) is disordered. Residues 786–796 (PMQTPTSSPPS) show a composition bias toward low complexity. The residue at position 919 (S919) is a Phosphoserine. T935 carries O-linked (GlcNAc) threonine glycosylation.

The protein belongs to the milton family. In terms of assembly, interacts with RHOT1 and RHOT2. Found in a complex with KIF5B, OGT, RHOT1 and RHOT2. Interacts with HGS. Interacts with GABRA1. Interacts with KIF5C. Interacts with OGT; stable interaction is not required for glycosylation of this protein by OGT. Isoform 1 interacts with OGT. O-glycosylated. Glycosylated by OGT; glycosylation in response to increased extracellular glucose levels is required for and leads to regulation of mitochondrial motility by OGT. As to expression, high expression in spinal cord and moderate expression in all other tissues and specific brain regions examined. Expressed in all cell lines examined.

The protein localises to the cytoplasm. Its subcellular location is the nucleus. It localises to the mitochondrion. The protein resides in the early endosome. It is found in the endosome. The protein localises to the mitochondrion membrane. Its subcellular location is the cell cortex. Its function is as follows. Involved in the regulation of endosome-to-lysosome trafficking, including endocytic trafficking of EGF-EGFR complexes and GABA-A receptors. Involved in mitochondrial motility. When O-glycosylated, abolishes mitochondrial motility. Crucial for recruiting OGT to the mitochondrial surface of neuronal processes. TRAK1 and RHOT form an essential protein complex that links KIF5 to mitochondria for light chain-independent, anterograde transport of mitochondria. This Homo sapiens (Human) protein is Trafficking kinesin-binding protein 1 (TRAK1).